The primary structure comprises 157 residues: Small ribosomal subunit protein uS7 (157 aa).

Belongs to the universal ribosomal protein uS7 family. In terms of assembly, part of the 30S ribosomal subunit. Contacts proteins S9 and S11.

In terms of biological role, one of the primary rRNA binding proteins, it binds directly to 16S rRNA where it nucleates assembly of the head domain of the 30S subunit. Is located at the subunit interface close to the decoding center, probably blocks exit of the E-site tRNA. This is Small ribosomal subunit protein uS7 from Chloroflexus aurantiacus (strain ATCC 29366 / DSM 635 / J-10-fl).